Consider the following 577-residue polypeptide: Beta-glucosidase 30 (577 aa).

Residues methionine 1–serine 23 form the signal peptide. A beta-D-glucoside is bound by residues glutamine 45, histidine 148, and asparagine 193 to glutamate 194. Catalysis depends on glutamate 194, which acts as the Proton donor. The cysteines at positions 213 and 221 are disulfide-linked. An N-linked (GlcNAc...) asparagine glycan is attached at asparagine 328. Tyrosine 338 lines the a beta-D-glucoside pocket. N-linked (GlcNAc...) asparagine glycosylation occurs at asparagine 368. A beta-D-glucoside contacts are provided by residues glutamate 410, tryptophan 460, glutamate 467–tryptophan 468, and phenylalanine 476. Glutamate 410 functions as the Nucleophile in the catalytic mechanism. 2 N-linked (GlcNAc...) asparagine glycosylation sites follow: asparagine 524 and asparagine 544.

The protein belongs to the glycosyl hydrolase 1 family.

The enzyme catalyses Hydrolysis of terminal, non-reducing beta-D-glucosyl residues with release of beta-D-glucose.. The chain is Beta-glucosidase 30 from Arabidopsis thaliana (Mouse-ear cress).